We begin with the raw amino-acid sequence, 312 residues long: DNA primase small subunit PriS (312 aa).

Residues Asp-88, Asp-90, and Asp-215 contribute to the active site.

It belongs to the eukaryotic-type primase small subunit family. In terms of assembly, heterodimer of a small subunit (PriS) and a large subunit (PriL). Mg(2+) is required as a cofactor. Requires Mn(2+) as cofactor.

In terms of biological role, catalytic subunit of DNA primase, an RNA polymerase that catalyzes the synthesis of short RNA molecules used as primers for DNA polymerase during DNA replication. The small subunit contains the primase catalytic core and has DNA synthesis activity on its own. Binding to the large subunit stabilizes and modulates the activity, increasing the rate of DNA synthesis while decreasing the length of the DNA fragments, and conferring RNA synthesis capability. The DNA polymerase activity may enable DNA primase to also catalyze primer extension after primer synthesis. May also play a role in DNA repair. The sequence is that of DNA primase small subunit PriS from Pyrobaculum aerophilum (strain ATCC 51768 / DSM 7523 / JCM 9630 / CIP 104966 / NBRC 100827 / IM2).